A 254-amino-acid chain; its full sequence is Leucyl/phenylalanyl-tRNA--protein transferase (254 aa).

It belongs to the L/F-transferase family.

It is found in the cytoplasm. The enzyme catalyses N-terminal L-lysyl-[protein] + L-leucyl-tRNA(Leu) = N-terminal L-leucyl-L-lysyl-[protein] + tRNA(Leu) + H(+). It carries out the reaction N-terminal L-arginyl-[protein] + L-leucyl-tRNA(Leu) = N-terminal L-leucyl-L-arginyl-[protein] + tRNA(Leu) + H(+). The catalysed reaction is L-phenylalanyl-tRNA(Phe) + an N-terminal L-alpha-aminoacyl-[protein] = an N-terminal L-phenylalanyl-L-alpha-aminoacyl-[protein] + tRNA(Phe). Functions in the N-end rule pathway of protein degradation where it conjugates Leu, Phe and, less efficiently, Met from aminoacyl-tRNAs to the N-termini of proteins containing an N-terminal arginine or lysine. The polypeptide is Leucyl/phenylalanyl-tRNA--protein transferase (Burkholderia lata (strain ATCC 17760 / DSM 23089 / LMG 22485 / NCIMB 9086 / R18194 / 383)).